We begin with the raw amino-acid sequence, 594 residues long: Capsid vertex component 1 (594 aa).

Disordered regions lie at residues 52–77 (GRST…DAVG), 176–205 (NKRD…NGSD), 443–468 (ARRQ…SGPP), and 575–594 (GRQE…FDDL). Positions 61-76 (GDEDDAPASDDAEDAV) are enriched in acidic residues.

This sequence belongs to the herpesviridae CVC1 protein family. In terms of assembly, interacts (via C-terminus) with capsid vertex component 2/CVC2.

Its subcellular location is the virion. The protein localises to the host nucleus. In terms of biological role, capsid vertex-specific component that plays a role during viral DNA encapsidation, assuring correct genome cleavage and presumably stabilizing capsids that contain full-length viral genomes. This Homo sapiens (Human) protein is Capsid vertex component 1.